The following is a 508-amino-acid chain: Cytochrome P450 monooxygenase tenA (508 aa).

A helical transmembrane segment spans residues 8–24 (VSLPYLILSACLSVILL). A heme-binding site is contributed by cysteine 456.

The protein belongs to the cytochrome P450 family. Requires heme as cofactor.

The protein resides in the membrane. It participates in secondary metabolite biosynthesis. In terms of biological role, cytochrome P450 monooxygenase; part of the gene cluster that mediates the biosynthesis of tenellin-type 2-pyridones, iron-chelating compounds involved in iron stress tolerance, competition with the natural competitor fungus Metarhizium robertsii and insect hosts infection. TenA catalyzes an oxidative ring expansion of pretenellin A and 14-hydropretellenin A to form the 2-pyridone core, leading to the production of pretenellin B and pyridovericin, respectively. The pathway begins with the assembly of the polyketide-amino acid backbone by the hybrid PKS-NRPS tenS with the help of the enoyl reductase tenC. These enzymes catalyze the synthesis of the pyrrolidine-2-dione intermediates pretellinin A, 11-hydropretellenin A, 12-hydropretellenin A, 13-hydropretellenin A, 14-hydropretellenin A, 12-oxopretellenin A and prototellinin D. The cytochrome P450 monooxygenase tenA then catalyzes an oxidative ring expansion of pretenellin A and 14-hydropretellenin A to form the 2-pyridone core, leading to pretenellin B and pyridovericin, respectively. The cytochrome P450 monooxygenase tenB is then required for the selective N-hydroxylation of the 2-pyridone nitrogen of yield tellinin and 15-hydroxytellenin (15-HT), respectively. The UDP-glucosyltransferase GT1 and the methyltransferase MT1, located outside the tenS gene cluster, contribute to the stepwise glycosylation and methylation of 15-HT to obtain the glycoside pyridovericin-N-O-(4-O-methyl-beta-D-glucopyranoside) (PMGP). Additional related compounds such as 1-O-methyl-15-HT, (8Z)-1-O-methyl-15-HT, and O-methyltenellin A are also produced but the enzymes involved in their biosynthesis have still to be determined. This is Cytochrome P450 monooxygenase tenA from Beauveria bassiana (White muscardine disease fungus).